Here is a 175-residue protein sequence, read N- to C-terminus: ATP synthase subunit b (175 aa).

The chain crosses the membrane as a helical span at residues L20–W40.

The protein belongs to the ATPase B chain family. F-type ATPases have 2 components, F(1) - the catalytic core - and F(0) - the membrane proton channel. F(1) has five subunits: alpha(3), beta(3), gamma(1), delta(1), epsilon(1). F(0) has four main subunits: a(1), b(2) and c(10-14). The alpha and beta chains form an alternating ring which encloses part of the gamma chain. F(1) is attached to F(0) by a central stalk formed by the gamma and epsilon chains, while a peripheral stalk is formed by the delta and b chains.

It is found in the cell inner membrane. Its function is as follows. F(1)F(0) ATP synthase produces ATP from ADP in the presence of a proton or sodium gradient. F-type ATPases consist of two structural domains, F(1) containing the extramembraneous catalytic core and F(0) containing the membrane proton channel, linked together by a central stalk and a peripheral stalk. During catalysis, ATP synthesis in the catalytic domain of F(1) is coupled via a rotary mechanism of the central stalk subunits to proton translocation. In terms of biological role, component of the F(0) channel, it forms part of the peripheral stalk, linking F(1) to F(0). In Chlorobaculum parvum (strain DSM 263 / NCIMB 8327) (Chlorobium vibrioforme subsp. thiosulfatophilum), this protein is ATP synthase subunit b.